The chain runs to 407 residues: MKYDHLLVRYGELTLKGSNRKKFVNQLRNNVNKSLKGLDGFVVKGKRDRMYIELEDHADINEITYRLSKIFGIKSISPVLKVEKTIEAMSAAAIKFAQQFEENSTFKIDVKRADKNFPMDTYELQRELGGTVLKQIENVSVNVKRPDHEIRVEVRLDAIYMYEEVVPGSGGLPVGTGGKTLLMLSGGIDSPVAGMEVMRRGVTIEAIHFHSPPFTSDQAKEKVIELTRILAERVGPIKLHIVPFTELQKRVNKVVHPRYTMTSTRRMMMRVADKLVHQIGALAIVNGENLGQVASQTLHSMYAINNVTSTPVLRPLLTYDKEEIIIKSKEIGTFETSIQPFEDCCTIFTPKNPVTEPNFEKVVQYESVFDFEEMINRAVENIETLEITSDYKTIKEQQTNQLINDFL.

A THUMP domain is found at 61 to 165 (NEITYRLSKI…LDAIYMYEEV (105 aa)). ATP is bound by residues 183-184 (ML), 208-209 (HF), Arg265, Gly287, and Gln296.

It belongs to the ThiI family.

It is found in the cytoplasm. It catalyses the reaction [ThiI sulfur-carrier protein]-S-sulfanyl-L-cysteine + a uridine in tRNA + 2 reduced [2Fe-2S]-[ferredoxin] + ATP + H(+) = [ThiI sulfur-carrier protein]-L-cysteine + a 4-thiouridine in tRNA + 2 oxidized [2Fe-2S]-[ferredoxin] + AMP + diphosphate. The catalysed reaction is [ThiS sulfur-carrier protein]-C-terminal Gly-Gly-AMP + S-sulfanyl-L-cysteinyl-[cysteine desulfurase] + AH2 = [ThiS sulfur-carrier protein]-C-terminal-Gly-aminoethanethioate + L-cysteinyl-[cysteine desulfurase] + A + AMP + 2 H(+). It participates in cofactor biosynthesis; thiamine diphosphate biosynthesis. Its function is as follows. Catalyzes the ATP-dependent transfer of a sulfur to tRNA to produce 4-thiouridine in position 8 of tRNAs, which functions as a near-UV photosensor. Also catalyzes the transfer of sulfur to the sulfur carrier protein ThiS, forming ThiS-thiocarboxylate. This is a step in the synthesis of thiazole, in the thiamine biosynthesis pathway. The sulfur is donated as persulfide by IscS. This is Probable tRNA sulfurtransferase from Staphylococcus aureus (strain JH1).